The primary structure comprises 201 residues: Large ribosomal subunit protein uL4 (201 aa).

Positions Arg44 to Gly71 are disordered.

Belongs to the universal ribosomal protein uL4 family. In terms of assembly, part of the 50S ribosomal subunit.

Functionally, one of the primary rRNA binding proteins, this protein initially binds near the 5'-end of the 23S rRNA. It is important during the early stages of 50S assembly. It makes multiple contacts with different domains of the 23S rRNA in the assembled 50S subunit and ribosome. Forms part of the polypeptide exit tunnel. The protein is Large ribosomal subunit protein uL4 of Edwardsiella ictaluri (strain 93-146).